A 117-amino-acid chain; its full sequence is Ig kappa chain V region 12F2 (117 aa).

A signal peptide spans 1 to 6 (LPGARC). A framework-1 region spans residues 7 to 29 (AYDMTQTPASVEVAVGGTVTIKC). Cys-29 and Cys-86 are joined by a disulfide. The interval 30 to 40 (QASQSISTYLS) is complementarity-determining-1. The segment at 41–55 (WYQQKPGQRPKLLIY) is framework-2. Residues 56-62 (RASTLAS) form a complementarity-determining-2 region. The tract at residues 63–94 (GVSSRFKGSGSGTEFTLTISGVECADAATYYC) is framework-3. The segment at 95-106 (QQGWSSSNVENV) is complementarity-determining-3. Positions 107–116 (FGGGTEVVVK) are framework-4.

In Oryctolagus cuniculus (Rabbit), this protein is Ig kappa chain V region 12F2.